The chain runs to 621 residues: DnaJ homolog subfamily C member 2 (621 aa).

Methionine 1 is modified (N-acetylmethionine). Serine 47, serine 49, serine 60, and serine 63 each carry phosphoserine. One can recognise a J domain in the interval 88–161; sequence DHYAVLGLGH…VKRRAFNSVD (74 aa). Positions 160–250 are ZRF1-UBD; the sequence is VDPTFDNSVP…RDERRWIEKQ (91 aa). Serine 183 is subject to Phosphoserine. 2 disordered regions span residues 294-315 and 427-453; these read EKKA…QRQA and EEAE…GSKN. 2 consecutive SANT domains span residues 449 to 511 and 549 to 604; these read NGSK…KLDP and TDFT…EMVK.

In terms of assembly, component of ribosome-associated complex (RAC), a heterodimer composed of Hsp70/DnaK-type chaperone HSPA14 and Hsp40/DnaJ-type chaperone DNAJC2. Interacts (via ZRF1-UBD region) with ID1. Phosphorylated in M (mitotic) phase.

Its subcellular location is the nucleus. The protein resides in the cytoplasm. It localises to the cytosol. Its function is as follows. Acts both as a chaperone in the cytosol and as a chromatin regulator in the nucleus. When cytosolic, acts as a molecular chaperone: component of the ribosome-associated complex (RAC), a complex involved in folding or maintaining nascent polypeptides in a folding-competent state. In the RAC complex, stimulates the ATPase activity of the ribosome-associated pool of Hsp70-type chaperones HSPA14 that bind to the nascent polypeptide chain. When nuclear, mediates the switching from polycomb-repressed genes to an active state: specifically recruited at histone H2A ubiquitinated at 'Lys-119' (H2AK119ub), and promotes the displacement of the polycomb PRC1 complex from chromatin, thereby facilitating transcription activation. The sequence is that of DnaJ homolog subfamily C member 2 (DNAJC2) from Macaca fascicularis (Crab-eating macaque).